A 79-amino-acid polypeptide reads, in one-letter code: Sulfur carrier protein TusA (79 aa).

Cys15 acts as the Cysteine persulfide intermediate in catalysis.

This sequence belongs to the sulfur carrier protein TusA family. As to quaternary structure, interacts with IscS.

The protein resides in the cytoplasm. It participates in tRNA modification. In terms of biological role, sulfur carrier protein involved in sulfur trafficking in the cell. Part of a sulfur-relay system required for 2-thiolation during synthesis of 2-thiouridine of the modified wobble base 5-methylaminomethyl-2-thiouridine (mnm(5)s(2)U) in tRNA. Interacts with IscS and stimulates its cysteine desulfurase activity. Accepts an activated sulfur from IscS, which is then transferred to TusD, and thus determines the direction of sulfur flow from IscS to 2-thiouridine formation. Also appears to be involved in sulfur transfer for the biosynthesis of molybdopterin. This Buchnera aphidicola subsp. Baizongia pistaciae (strain Bp) protein is Sulfur carrier protein TusA.